A 118-amino-acid chain; its full sequence is Beta-2-microglobulin (118 aa).

The signal sequence occupies residues 1-20 (MAPLVALVLLGLLSLSGLDA). The 88-residue stretch at 25–112 (PKVQVYSRHP…HVTLDKPKIV (88 aa)) folds into the Ig-like C1-type domain. Residues Cys-45 and Cys-99 are joined by a disulfide bond.

Belongs to the beta-2-microglobulin family. Heterodimer of an alpha chain and a beta chain. Beta-2-microglobulin is the beta-chain of major histocompatibility complex class I molecules.

The protein resides in the secreted. Its function is as follows. Component of the class I major histocompatibility complex (MHC). Involved in the presentation of peptide antigens to the immune system. The polypeptide is Beta-2-microglobulin (B2M) (Sus scrofa (Pig)).